The sequence spans 398 residues: MGLVDSLLGKDARKFLKRKDSDAAEAGRALEELRSSLYNELKTSEGAKRQQQRFCGPVVAMSFNFVVAVGIILANKLVMGRVGFNFPIFLTLIHYTVAWILLAFFKSLSLLPMSPPSKTTPFSSLFSLGAVMAFASGLANTSLKHNSVGFYQMAKIAVTPTIVLAEFVLFKKTISSTKVMALAVVSLGVAIATVTDLEFNLFGALVAVAWIIPSAINKILWSNLQQQANWTALALMWKTTPFTVFFLLALMPWLDPPGVLLFKWDLTNSSAILISALLGFLLQWSGALALGATSATSHVVLGQFKTCVILLGGYVIFGSDPGFISICGAIAALGGMSVYTWLNLPGKSIDHMSNKQLPKQNVTVSKPKAEADDGGGETGVTVVSVDPLLSKTITANIV.

Transmembrane regions (helical) follow at residues 54 to 74 (FCGP…IILA), 84 to 104 (FNFP…LLAF), 119 to 139 (TTPF…SGLA), 150 to 170 (FYQM…FVLF), 179 to 199 (VMAL…DLEF), 201 to 221 (LFGA…KILW), 242 to 262 (FTVF…VLLF), 271 to 291 (AILI…LALG), 299 to 319 (VVLG…IFGS), and 322 to 342 (GFIS…YTWL).

This sequence belongs to the TPT transporter family. TPT (TC 2.A.7.9) subfamily.

The protein resides in the membrane. The polypeptide is Nucleotide-sugar uncharacterized transporter 2 (Arabidopsis thaliana (Mouse-ear cress)).